We begin with the raw amino-acid sequence, 220 residues long: uncharacterized protein (220 aa).

The tract at residues 196 to 220 is disordered; sequence KDDNSKDDNNDSEDLSKQIDNLKLD.

This is an uncharacterized protein from Invertebrate iridescent virus 6 (IIV-6).